The chain runs to 60 residues: Large ribosomal subunit protein bL32 (60 aa).

This sequence belongs to the bacterial ribosomal protein bL32 family.

The chain is Large ribosomal subunit protein bL32 from Hydrogenobaculum sp. (strain Y04AAS1).